Reading from the N-terminus, the 236-residue chain is TVP38/TMEM64 family membrane protein YdjX (236 aa).

A run of 5 helical transmembrane segments spans residues 7–27 (FLFACLIFALVIYAIHAFGLF), 50–70 (LYILLFIIATLLLLPGSILVI), 72–92 (GGIVFGPLLGTLLSLIAATLA), 156–176 (IAFWPYTLISALTTLPGIVIY), and 192–212 (FILQLCLAGLALFILVQLAKL). Positions 73–183 (GIVFGPLLGT…VIYTVMASDL (111 aa)) are VTT domain.

Belongs to the TVP38/TMEM64 family.

The protein localises to the cell membrane. The protein is TVP38/TMEM64 family membrane protein YdjX (ydjX) of Escherichia coli (strain K12).